Reading from the N-terminus, the 302-residue chain is AP-1 complex-associated regulatory protein (302 aa).

A Phosphoserine modification is found at serine 29. The tract at residues 78-138 is interaction with AP1G1; the sequence is DSIAEKQKDL…ERQRIVQQYH (61 aa). Residues 80-138 adopt a coiled-coil conformation; the sequence is IAEKQKDLDKKIQKELALQEEKLRLEEEALYAAQREAARAAKQRKLLEQERQRIVQQYH. Over residues 188–206 the composition is skewed to polar residues; it reads CDLMTKTKSTSGNDDSTSL. Positions 188–258 are disordered; it reads CDLMTKTKST…TSASDDSNGL (71 aa). Positions 199–215 are sufficient for association with the Arp2/3 complex; it reads GNDDSTSLDLEWEDEEG. Positions 221 to 233 are enriched in basic and acidic residues; it reads PMRERSKTEEDIL. Serine 226 bears the Phosphoserine mark. Phosphothreonine is present on threonine 228. The span at 242–255 shows a compositional bias: polar residues; it reads KKTGSNPTSASDDS.

In terms of assembly, interacts (via coiled-coil domain) with AP1G1 (via GAE domain). Interacts with KIF5B. Associates with the Arp2/3 complex. In terms of processing, palmitoylated.

The protein resides in the golgi apparatus. Its subcellular location is the trans-Golgi network. It is found in the late endosome. It localises to the early endosome. Functionally, necessary for adaptor protein complex 1 (AP-1)-dependent transport between the trans-Golgi network and endosomes. Regulates the membrane association of AP1G1/gamma1-adaptin, one of the subunits of the AP-1 adaptor complex. The direct interaction with AP1G1/gamma1-adaptin attenuates the release of the AP-1 complex from membranes. Regulates endosomal membrane traffic via association with AP-1 and KIF5B thus linking kinesin-based plus-end-directed microtubular transport to AP-1-dependent membrane traffic. May act as effector of AP-1 in calcium-induced endo-lysosome secretion. Inhibits Arp2/3 complex function; negatively regulates cell spreading, size and motility via intracellular sequestration of the Arp2/3 complex. This chain is AP-1 complex-associated regulatory protein (AP1AR), found in Homo sapiens (Human).